Here is a 719-residue protein sequence, read N- to C-terminus: Probable phosphatidylinositol phosphate kinase DDB_G0267588 (719 aa).

The segment at 47 to 261 (VFSPIPPPPS…SDSPNRVRLN (215 aa)) is disordered. Composition is skewed to low complexity over residues 57–77 (TTDN…TDNT) and 87–104 (IENN…PNSI). Basic and acidic residues predominate over residues 107–129 (ANKKDSIELEEDKEHSIKRKDGS). A compositionally biased stretch (polar residues) spans 172–184 (FDATNDNHNPQEV). Residues 199–217 (TTTTTTTTTTTTSTNSTSN) show a composition bias toward low complexity. Composition is skewed to polar residues over residues 218-228 (KLPNNGDNTVS) and 248-261 (ASGS…VRLN). Residue Thr-262 is modified to Phosphothreonine. Residues 316–718 (NAVGKSMGTE…RFQEFLSTII (403 aa)) form the PIPK domain. The tract at residues 579 to 638 (RENEPPSPSLLRSTLEDSSDFESPSMEQSSAGQQQQQRGSGNYDNSGAGRDSTTGGAAPK) is disordered. The segment covering 606–619 (QSSAGQQQQQRGSG) has biased composition (low complexity).

Post-translationally, phosphorylated at Thr-262 by pkgB.

May be involved in signaling events that underlie chemotaxis via the chemoattractant-mediated pkgB phosphorylation. The polypeptide is Probable phosphatidylinositol phosphate kinase DDB_G0267588 (Dictyostelium discoideum (Social amoeba)).